The primary structure comprises 472 residues: Carboxypeptidase Q (472 aa).

Residues 1–20 (MKFLIFAFFGGVHLLSLCSG) form the signal peptide. A propeptide spanning residues 21–44 (KAIYKNGISKRTFEEIKEEIASYG) is cleaved from the precursor. N-linked (GlcNAc...) asparagine glycosylation is found at N61 and N179. Residues H290 and D302 each coordinate Zn(2+). The active-site Nucleophile is E336. E337 is a Zn(2+) binding site. 2 N-linked (GlcNAc...) asparagine glycosylation sites follow: N353 and N356. D364 is a Zn(2+) binding site. An N-linked (GlcNAc...) asparagine glycan is attached at N396. Position 434 (H434) interacts with Zn(2+).

Belongs to the peptidase M28 family. Homodimer. The monomeric form is inactive while the homodimer is active. In terms of processing, N-glycosylated. The secreted form is modified by hybrid or complex type oligosaccharide chains.

The protein resides in the endoplasmic reticulum. It is found in the golgi apparatus. It localises to the lysosome. Its subcellular location is the secreted. Its function is as follows. Carboxypeptidase that may play an important role in the hydrolysis of circulating peptides. Catalyzes the hydrolysis of dipeptides with unsubstituted terminals into amino acids. May play a role in the liberation of thyroxine hormone from its thyroglobulin (Tg) precursor. The polypeptide is Carboxypeptidase Q (CPQ) (Pongo abelii (Sumatran orangutan)).